The chain runs to 640 residues: MGKIIGIDLGTTNSCVAVMQGTQPTVIENSEGYRTTPSMVAFTKNGERLIGHAAKRQAITNAKNTVFSIKRFMGRKFDEVPNEKKIAPYKVVNINGEARVEIDDKNYSPQEISAMILQKMKQTAEDFLGEKVTEAVITVPAYFNDAQRQATKDAGKIAGLEVKRIINEPTAAALAYGLDKKKENEKVAVFDLGGGTFDISILELGDGVFEVKSTDGDTHLGGDDFDQTIIDFLADEFKKQEGIDLRTDAIALQRLKEAAEKAKIELSSRTDTEINLPFITATQEGPKHLVVNLTRAKFEALASTLFDNIMAPCKRAIKNAKVNISEIDEVVLVGGSTRIPKVQELVKELFKREPNKSVNPDEVVAVGAAIQGGVLTGEVSDVLLLDVTPLSLGIETLGGVMTKLIEANTTIPTKKQEVFSTAADNQTSVEVHVLQGERPMASDNKTLGRFHLGDIPPAPRGMPQVEVAFDIDANGILHVSAKDKATGKEQSIRIEAGGKLNDAEIEKMKNDAKAHAEEDAKRKEEVETKNAADSLIFSTEKQLQELGDKIPADKKAPLESALDRLKEAHKSGSADAIKPAMDEVNTIWNDIASQLYQAADAPGSGTPNPEAESGKQESSGKTDGQVDAEYEVIDGNDKDK.

The residue at position 196 (Thr196) is a Phosphothreonine; by autocatalysis. 2 disordered regions span residues 510–530 (NDAK…ETKN) and 598–640 (AADA…DKDK).

This sequence belongs to the heat shock protein 70 family.

In terms of biological role, acts as a chaperone. The polypeptide is Chaperone protein DnaK (Prosthecochloris aestuarii (strain DSM 271 / SK 413)).